Here is a 475-residue protein sequence, read N- to C-terminus: Aspartyl/glutamyl-tRNA(Asn/Gln) amidotransferase subunit B (475 aa).

The protein belongs to the GatB/GatE family. GatB subfamily. In terms of assembly, heterotrimer of A, B and C subunits.

It catalyses the reaction L-glutamyl-tRNA(Gln) + L-glutamine + ATP + H2O = L-glutaminyl-tRNA(Gln) + L-glutamate + ADP + phosphate + H(+). The catalysed reaction is L-aspartyl-tRNA(Asn) + L-glutamine + ATP + H2O = L-asparaginyl-tRNA(Asn) + L-glutamate + ADP + phosphate + 2 H(+). Functionally, allows the formation of correctly charged Asn-tRNA(Asn) or Gln-tRNA(Gln) through the transamidation of misacylated Asp-tRNA(Asn) or Glu-tRNA(Gln) in organisms which lack either or both of asparaginyl-tRNA or glutaminyl-tRNA synthetases. The reaction takes place in the presence of glutamine and ATP through an activated phospho-Asp-tRNA(Asn) or phospho-Glu-tRNA(Gln). In Staphylococcus carnosus (strain TM300), this protein is Aspartyl/glutamyl-tRNA(Asn/Gln) amidotransferase subunit B.